Consider the following 547-residue polypeptide: Glucose-6-phosphate isomerase 1 (547 aa).

Glu353 serves as the catalytic Proton donor. Residues His384 and Lys512 contribute to the active site.

The protein belongs to the GPI family.

The protein localises to the cytoplasm. It carries out the reaction alpha-D-glucose 6-phosphate = beta-D-fructose 6-phosphate. Its pathway is carbohydrate biosynthesis; gluconeogenesis. It functions in the pathway carbohydrate degradation; glycolysis; D-glyceraldehyde 3-phosphate and glycerone phosphate from D-glucose: step 2/4. Catalyzes the reversible isomerization of glucose-6-phosphate to fructose-6-phosphate. The polypeptide is Glucose-6-phosphate isomerase 1 (Chromobacterium violaceum (strain ATCC 12472 / DSM 30191 / JCM 1249 / CCUG 213 / NBRC 12614 / NCIMB 9131 / NCTC 9757 / MK)).